Here is a 31-residue protein sequence, read N- to C-terminus: Protamine-YI (31 aa).

A disordered region spans residues 1–31 (ARRRRSSSRPIRRRRPRRRTTRRRRAGRRRR).

In terms of tissue distribution, testis.

The protein resides in the nucleus. Its subcellular location is the chromosome. Protamines substitute for histones in the chromatin of sperm during the haploid phase of spermatogenesis. They compact sperm DNA into a highly condensed, stable and inactive complex. The polypeptide is Protamine-YI (Clupea harengus (Atlantic herring)).